We begin with the raw amino-acid sequence, 470 residues long: 63 kDa sperm flagellar membrane protein (470 aa).

An N-terminal signal peptide occupies residues 1–25 (MFCHLHCMLVVFSLLLTLTGSFVNA). An EGF-like 1 domain is found at 41-80 (PPDPCASNPCTIASTHCVAAGESHTCECRPGYFETNGNCT). Disulfide bonds link C45–C57, C50–C66, and C68–C79. N-linked (GlcNAc...) asparagine glycosylation is found at N78, N170, and N219. An SEA domain is found at 81-205 (VAQQFAGSFS…STITVSDFDE (125 aa)). An EGF-like 2; calcium-binding domain is found at 202–250 (DFDECASADDNDCDPNANCTNTAGSFTCECDTELYDNSPNTEEPGRVCI). Cystine bridges form between C206–C220, C214–C229, C231–C249, C253–C265, C258–C277, and C279–C291. One can recognise an EGF-like 3 domain in the interval 249-292 (CIAPCDPGLCTRPNEICNNGGTIEDDNLCKCIEGYDYTQYGDCD). An N-linked (GlcNAc...) asparagine glycan is attached at N322. G446 carries GPI-anchor amidated glycine lipidation. The propeptide at 447–470 (SQRHLPVCGVLSLVVTTLLALMLH) is removed in mature form.

As to expression, sperm.

It is found in the cell projection. The protein localises to the cilium. It localises to the flagellum membrane. The sequence is that of 63 kDa sperm flagellar membrane protein from Strongylocentrotus purpuratus (Purple sea urchin).